The sequence spans 763 residues: Phosphoglycerol transferase I (763 aa).

Transmembrane regions (helical) follow at residues 4–19 (LLSF…IYAW), 26–48 (WWFA…LFAS), 76–98 (YILP…GWIL), and 105–127 (PHHF…ASPA).

It belongs to the OpgB family.

The protein localises to the cell inner membrane. It carries out the reaction a phosphatidylglycerol + a membrane-derived-oligosaccharide D-glucose = a 1,2-diacyl-sn-glycerol + a membrane-derived-oligosaccharide 6-(glycerophospho)-D-glucose.. Its pathway is glycan metabolism; osmoregulated periplasmic glucan (OPG) biosynthesis. Transfers a phosphoglycerol residue from phosphatidylglycerol to the membrane-bound nascent glucan backbones. The polypeptide is Phosphoglycerol transferase I (Escherichia coli O157:H7).